The following is a 1091-amino-acid chain: Neural cell adhesion molecule 1 (1091 aa).

A signal peptide spans 1 to 19 (MLPAAALPWTLFFLGAAAS). Ig-like C2-type domains are found at residues 20–113 (LQVD…VNVK), 116–205 (QKLM…KDIQ), 212–301 (PSVR…ATIH), 308–403 (PKIT…LEVQ), and 406–495 (PKLQ…FILV). At 20 to 711 (LQVDIVPSQG…STSPTSGLGT (692 aa)) the chain is on the extracellular side. 2 cysteine pairs are disulfide-bonded: C41-C96 and C139-C189. Residues 152-156 (KHKGR) and 161-165 (KKDVR) contribute to the heparin site. A glycan (N-linked (GlcNAc...) asparagine) is linked at N222. C235 and C287 are oxidised to a cystine. N315, N347, N423, N449, and N478 each carry an N-linked (GlcNAc...) asparagine glycan. C329 and C385 are joined by a disulfide. An intrachain disulfide couples C426 to C479. 2 Fibronectin type-III domains span residues 499 to 598 (TPSS…TQPV) and 600 to 696 (EPSA…SAQP). Residues 712–729 (AAIVGILIVIFVLLLVAV) form a helical membrane-spanning segment. Topologically, residues 730 to 1091 (DVTCYFLNKC…ATEIRHLQQK (362 aa)) are cytoplasmic. Disordered regions lie at residues 756-809 (GAKG…TEPE), 840-916 (ATAQ…NNLS), 937-1023 (ETSK…GTFK), and 1041-1091 (TPAS…LQQK). Basic and acidic residues predominate over residues 758-799 (KGKDMEEGKAAFSKDESKEPIVEVRTEEERTPNHDGGKHTEP). The span at 845 to 856 (SPTSETTTLTSS) shows a compositional bias: low complexity. Polar residues-rich tracts occupy residues 904 to 916 (DTPS…NNLS) and 980 to 1012 (QPST…PSQN). 2 stretches are compositionally biased toward basic and acidic residues: residues 1013–1023 (EDFKMDEGTFK) and 1068–1091 (KTEK…LQQK).

Post-translationally, polysialylated by ST8SIA2 and ST8SIA4. Polysialylation modulates cell interactions by confering both attractive and repulsive properties that are highly regulated by ST8SIA2 and ST8SIA4. Polysialylation is formed on a-2,3-linked sialic acid of core glycans.

The protein localises to the cell membrane. This protein is a cell adhesion molecule involved in neuron-neuron adhesion, neurite fasciculation, outgrowth of neurites, etc. The protein is Neural cell adhesion molecule 1 of Gallus gallus (Chicken).